The primary structure comprises 135 residues: Large ribosomal subunit protein uL16c (135 aa).

This sequence belongs to the universal ribosomal protein uL16 family. In terms of assembly, part of the 50S ribosomal subunit.

It is found in the plastid. The protein localises to the chloroplast. The sequence is that of Large ribosomal subunit protein uL16c from Ranunculus macranthus (Large buttercup).